The primary structure comprises 122 residues: Large ribosomal subunit protein uL14 (122 aa).

The protein belongs to the universal ribosomal protein uL14 family. Part of the 50S ribosomal subunit. Forms a cluster with proteins L3 and L19. In the 70S ribosome, L14 and L19 interact and together make contacts with the 16S rRNA in bridges B5 and B8.

In terms of biological role, binds to 23S rRNA. Forms part of two intersubunit bridges in the 70S ribosome. The sequence is that of Large ribosomal subunit protein uL14 from Psychromonas ingrahamii (strain DSM 17664 / CCUG 51855 / 37).